A 643-amino-acid polypeptide reads, in one-letter code: Protein ecdysoneless homolog (643 aa).

Disordered regions lie at residues 428-458 and 501-600; these read EFYN…NNFD and IESM…FTPV. Residues 446–456 show a composition bias toward polar residues; it reads AGSSSDANMNN. Acidic residues predominate over residues 528-543; sequence MDFDDVEDDSEGEESN. Polar residues predominate over residues 564-580; it reads NSTLEKSFENVNQQHSS. Positions 581-592 are enriched in basic and acidic residues; it reads KQNEESSKTRDE.

The protein belongs to the ECD family.

This chain is Protein ecdysoneless homolog, found in Arabidopsis thaliana (Mouse-ear cress).